Consider the following 294-residue polypeptide: Lipoyl synthase (294 aa).

Residues C38, C43, C49, C64, C68, C71, and S277 each contribute to the [4Fe-4S] cluster site. Residues 50-266 (WSRGTATFLL…RSFAEGAGFR (217 aa)) enclose the Radical SAM core domain.

This sequence belongs to the radical SAM superfamily. Lipoyl synthase family. Requires [4Fe-4S] cluster as cofactor.

The protein localises to the cytoplasm. The enzyme catalyses [[Fe-S] cluster scaffold protein carrying a second [4Fe-4S](2+) cluster] + N(6)-octanoyl-L-lysyl-[protein] + 2 oxidized [2Fe-2S]-[ferredoxin] + 2 S-adenosyl-L-methionine + 4 H(+) = [[Fe-S] cluster scaffold protein] + N(6)-[(R)-dihydrolipoyl]-L-lysyl-[protein] + 4 Fe(3+) + 2 hydrogen sulfide + 2 5'-deoxyadenosine + 2 L-methionine + 2 reduced [2Fe-2S]-[ferredoxin]. It participates in protein modification; protein lipoylation via endogenous pathway; protein N(6)-(lipoyl)lysine from octanoyl-[acyl-carrier-protein]: step 2/2. Catalyzes the radical-mediated insertion of two sulfur atoms into the C-6 and C-8 positions of the octanoyl moiety bound to the lipoyl domains of lipoate-dependent enzymes, thereby converting the octanoylated domains into lipoylated derivatives. The chain is Lipoyl synthase from Pelodictyon phaeoclathratiforme (strain DSM 5477 / BU-1).